The primary structure comprises 603 residues: Chaperone protein DnaK (603 aa).

Thr-175 is subject to Phosphothreonine; by autocatalysis. Positions 573 to 586 (AQQAQQQNPDNQNN) are enriched in low complexity. Residues 573–603 (AQQAQQQNPDNQNNNKDDVTEATVTDDSTKK) form a disordered region. The segment covering 594–603 (ATVTDDSTKK) has biased composition (polar residues).

This sequence belongs to the heat shock protein 70 family.

Functionally, acts as a chaperone. The sequence is that of Chaperone protein DnaK from Ureaplasma parvum serovar 3 (strain ATCC 27815 / 27 / NCTC 11736).